A 479-amino-acid polypeptide reads, in one-letter code: ATP synthase subunit beta (479 aa).

ATP is bound at residue 153–160 (GGAGVGKT).

Belongs to the ATPase alpha/beta chains family. As to quaternary structure, F-type ATPases have 2 components, CF(1) - the catalytic core - and CF(0) - the membrane proton channel. CF(1) has five subunits: alpha(3), beta(3), gamma(1), delta(1), epsilon(1). CF(0) has three main subunits: a(1), b(2) and c(9-12). The alpha and beta chains form an alternating ring which encloses part of the gamma chain. CF(1) is attached to CF(0) by a central stalk formed by the gamma and epsilon chains, while a peripheral stalk is formed by the delta and b chains.

Its subcellular location is the cell membrane. The catalysed reaction is ATP + H2O + 4 H(+)(in) = ADP + phosphate + 5 H(+)(out). In terms of biological role, produces ATP from ADP in the presence of a proton gradient across the membrane. The catalytic sites are hosted primarily by the beta subunits. This chain is ATP synthase subunit beta, found in Lactobacillus delbrueckii subsp. bulgaricus (strain ATCC BAA-365 / Lb-18).